The sequence spans 416 residues: UDP-N-acetylglucosamine 1-carboxyvinyltransferase (416 aa).

Phosphoenolpyruvate is bound at residue 22-23 (KN). UDP-N-acetyl-alpha-D-glucosamine is bound at residue Arg92. Cys116 (proton donor) is an active-site residue. Cys116 is subject to 2-(S-cysteinyl)pyruvic acid O-phosphothioketal. UDP-N-acetyl-alpha-D-glucosamine is bound by residues Asp306 and Ile328.

This sequence belongs to the EPSP synthase family. MurA subfamily.

It is found in the cytoplasm. It catalyses the reaction phosphoenolpyruvate + UDP-N-acetyl-alpha-D-glucosamine = UDP-N-acetyl-3-O-(1-carboxyvinyl)-alpha-D-glucosamine + phosphate. Its pathway is cell wall biogenesis; peptidoglycan biosynthesis. Functionally, cell wall formation. Adds enolpyruvyl to UDP-N-acetylglucosamine. This chain is UDP-N-acetylglucosamine 1-carboxyvinyltransferase, found in Buchnera aphidicola subsp. Baizongia pistaciae (strain Bp).